The sequence spans 261 residues: Proteasome subunit alpha type-4 (261 aa).

Serine 13 and serine 75 each carry phosphoserine. N6-acetyllysine is present on lysine 127. Serine 173 carries the post-translational modification Phosphoserine. Lysine 176 carries the post-translational modification N6-acetyllysine. Residues 240–261 are disordered; sequence HEEEEAKAEREKKEKEQKEKDK.

Belongs to the peptidase T1A family. The 26S proteasome consists of a 20S proteasome core and two 19S regulatory subunits. The 20S proteasome core is a barrel-shaped complex made of 28 subunits that are arranged in four stacked rings. The two outer rings are each formed by seven alpha subunits, and the two inner rings are formed by seven beta subunits. The proteolytic activity is exerted by three beta-subunits PSMB5, PSMB6 and PSMB7.

It localises to the cytoplasm. Its subcellular location is the nucleus. Functionally, component of the 20S core proteasome complex involved in the proteolytic degradation of most intracellular proteins. This complex plays numerous essential roles within the cell by associating with different regulatory particles. Associated with two 19S regulatory particles, forms the 26S proteasome and thus participates in the ATP-dependent degradation of ubiquitinated proteins. The 26S proteasome plays a key role in the maintenance of protein homeostasis by removing misfolded or damaged proteins that could impair cellular functions, and by removing proteins whose functions are no longer required. Associated with the PA200 or PA28, the 20S proteasome mediates ubiquitin-independent protein degradation. This type of proteolysis is required in several pathways including spermatogenesis (20S-PA200 complex) or generation of a subset of MHC class I-presented antigenic peptides (20S-PA28 complex). This Bos taurus (Bovine) protein is Proteasome subunit alpha type-4 (PSMA4).